Here is a 248-residue protein sequence, read N- to C-terminus: Tryptophan synthase alpha chain (248 aa).

Catalysis depends on proton acceptor residues Glu-36 and Asp-47.

The protein belongs to the TrpA family. Tetramer of two alpha and two beta chains.

The enzyme catalyses (1S,2R)-1-C-(indol-3-yl)glycerol 3-phosphate + L-serine = D-glyceraldehyde 3-phosphate + L-tryptophan + H2O. It functions in the pathway amino-acid biosynthesis; L-tryptophan biosynthesis; L-tryptophan from chorismate: step 5/5. Functionally, the alpha subunit is responsible for the aldol cleavage of indoleglycerol phosphate to indole and glyceraldehyde 3-phosphate. This is Tryptophan synthase alpha chain from Pyrococcus furiosus (strain ATCC 43587 / DSM 3638 / JCM 8422 / Vc1).